We begin with the raw amino-acid sequence, 146 residues long: YNIGNLQCPNAVLQHMSIPQFLGEGKPVVFVRKSESDYGDVVRVMTVVYIKFFVKTTKLCVDQTVWKVNDEQLVVTGGKVGNENDIFKIMKTDLVTPGGSKYVYKLLHCPSHLGCKNIGGNFKNGYPRLVTVDDDKDFIPFVFIKA.

2 disulfides stabilise this stretch: Cys-8-Cys-60 and Cys-109-Cys-115.

It belongs to the protease inhibitor I3 (leguminous Kunitz-type inhibitor) family.

The protein localises to the vacuole. In terms of biological role, inhibitor of cysteine proteases. May protect the plant by inhibiting proteases of invading organisms. The polypeptide is Cysteine protease inhibitor 3 (Solanum tuberosum (Potato)).